We begin with the raw amino-acid sequence, 757 residues long: Relaxin receptor 1 (757 aa).

Residues methionine 1–arginine 409 lie on the Extracellular side of the membrane. In terms of domain architecture, LDL-receptor class A spans lysine 26 to glycine 63. 3 disulfide bridges follow: cysteine 27/cysteine 40, cysteine 34/cysteine 53, and cysteine 47/cysteine 62. N-linked (GlcNAc...) asparagine glycosylation is present at asparagine 36. Residues leucine 45, asparagine 48, valine 50, aspartate 52, aspartate 58, and glutamate 59 each contribute to the Ca(2+) site. The 37-residue stretch at glutamate 91–asparagine 127 folds into the LRRNT domain. An N-linked (GlcNAc...) asparagine glycan is attached at asparagine 127. LRR repeat units follow at residues aspartate 151–glycine 172, serine 175–aspartate 196, arginine 199–glycine 220, serine 223–glutamine 244, arginine 248–serine 269, asparagine 272–proline 293, lysine 296–aspartate 317, glutamate 320–tyrosine 341, and lysine 344–proline 365. 2 N-linked (GlcNAc...) asparagine glycosylation sites follow: asparagine 264 and asparagine 272. N-linked (GlcNAc...) asparagine glycosylation is present at asparagine 325. N-linked (GlcNAc...) asparagine glycosylation occurs at asparagine 368. A helical membrane pass occupies residues valine 410–arginine 430. The Cytoplasmic portion of the chain corresponds to proline 431–serine 443. Residues isoleucine 444–phenylalanine 464 form a helical membrane-spanning segment. The Extracellular segment spans residues aspartate 465–glutamine 486. Cysteine 485 and cysteine 563 form a disulfide bridge. The chain crosses the membrane as a helical span at residues leucine 487–threonine 507. Over leucine 508 to arginine 527 the chain is Cytoplasmic. A helical membrane pass occupies residues threonine 528–serine 548. Over asparagine 549–glutamine 577 the chain is Extracellular. Residues isoleucine 578–serine 598 form a helical membrane-spanning segment. Over tyrosine 599–arginine 629 the chain is Cytoplasmic. Residues phenylalanine 630–leucine 650 traverse the membrane as a helical segment. A topological domain (extracellular) is located at residue serine 651. A helical membrane pass occupies residues leucine 652–isoleucine 672. Residues asparagine 673–serine 757 are Cytoplasmic-facing.

Belongs to the G-protein coupled receptor 1 family. In terms of assembly, interacts with C1QTNF8. As to expression, expressed in the brain, kidney, testis, placenta, uterus, ovary, adrenal, prostate, skin and heart. Not detected in spleen.

It localises to the cell membrane. Receptor for relaxins. The activity of this receptor is mediated by G proteins leading to stimulation of adenylate cyclase and an increase of cAMP. Binding of the ligand may also activate a tyrosine kinase pathway that inhibits the activity of a phosphodiesterase that degrades cAMP. The sequence is that of Relaxin receptor 1 (RXFP1) from Homo sapiens (Human).